Consider the following 151-residue polypeptide: NADPH-dependent 7-cyano-7-deazaguanine reductase (151 aa).

C49 acts as the Thioimide intermediate in catalysis. The active-site Proton donor is the D56. Residues 71–73 and 90–91 each bind substrate; these read IES and HE.

This sequence belongs to the GTP cyclohydrolase I family. QueF type 1 subfamily.

The protein localises to the cytoplasm. The enzyme catalyses 7-aminomethyl-7-carbaguanine + 2 NADP(+) = 7-cyano-7-deazaguanine + 2 NADPH + 3 H(+). Its pathway is tRNA modification; tRNA-queuosine biosynthesis. Its function is as follows. Catalyzes the NADPH-dependent reduction of 7-cyano-7-deazaguanine (preQ0) to 7-aminomethyl-7-deazaguanine (preQ1). The polypeptide is NADPH-dependent 7-cyano-7-deazaguanine reductase (Caulobacter vibrioides (strain ATCC 19089 / CIP 103742 / CB 15) (Caulobacter crescentus)).